The following is a 327-amino-acid chain: Malate dehydrogenase (327 aa).

Residue 11–17 (GAAGQIA) participates in NAD(+) binding. Substrate is bound by residues Arg92 and Arg98. Residues Asn105, Gln112, and 128-130 (VGN) each bind NAD(+). The substrate site is built by Asn130 and Arg160. The Proton acceptor role is filled by His185.

The protein belongs to the LDH/MDH superfamily. MDH type 2 family.

The catalysed reaction is (S)-malate + NAD(+) = oxaloacetate + NADH + H(+). Catalyzes the reversible oxidation of malate to oxaloacetate. This is Malate dehydrogenase from Magnetococcus marinus (strain ATCC BAA-1437 / JCM 17883 / MC-1).